Here is a 485-residue protein sequence, read N- to C-terminus: Adenosylhomocysteinase (485 aa).

Residues T64, D139, and E205 each contribute to the substrate site. T206–T208 is an NAD(+) binding site. 2 residues coordinate substrate: K235 and D239. Residues N240, G269–G274, E292, N327, I348–H350, and N397 contribute to the NAD(+) site.

The protein belongs to the adenosylhomocysteinase family. It depends on NAD(+) as a cofactor.

The catalysed reaction is S-adenosyl-L-homocysteine + H2O = L-homocysteine + adenosine. Its pathway is amino-acid biosynthesis; L-homocysteine biosynthesis; L-homocysteine from S-adenosyl-L-homocysteine: step 1/1. In terms of biological role, adenosylhomocysteine is a competitive inhibitor of S-adenosyl-L-methionine-dependent methyl transferase reactions; therefore adenosylhomocysteinase may play a key role in the control of methylations via regulation of the intracellular concentration of adenosylhomocysteine. The sequence is that of Adenosylhomocysteinase (SAHH) from Lupinus luteus (European yellow lupine).